Consider the following 595-residue polypeptide: Polyadenylate-binding protein-interacting protein 4 (595 aa).

One can recognise a Sm domain in the interval 48-113 (RLVYFTTCKI…SRSEFVRKPP (66 aa)). 2 stretches are compositionally biased toward polar residues: residues 302 to 313 (GGSSTSDGQKPA) and 326 to 346 (GDSQSSRKNKNVDQSCSTSKQ). Disordered regions lie at residues 302–505 (GGSS…FYYP) and 536–595 (MYHP…KGRE). The span at 364–382 (DEQRRKNNEEVSHNNRSAE) shows a compositional bias: basic and acidic residues. The segment covering 416–465 (SQVSSKTKSESSFGQSASRSSESRPGPSTSSRPGLSPSSSIGSMASSEKS) has biased composition (low complexity). Positions 466–474 (TLNPNAKEF) match the PAM2-like 1; degenerate motif. The short motif at 475 to 485 (KLNPKAKSFKP) is the PAM2-like 2 element. Composition is skewed to low complexity over residues 488–501 (SAAAPPQSPIADAS) and 548–570 (QPQYPQQQMIPGQQQQQMIPGQQ).

In terms of tissue distribution, expressed in cauline leaves, stems, rosette leaves, immature siliques and primary inflorescences.

This chain is Polyadenylate-binding protein-interacting protein 4 (CID4), found in Arabidopsis thaliana (Mouse-ear cress).